Reading from the N-terminus, the 108-residue chain is Ribulose bisphosphate carboxylase small subunit (108 aa).

It belongs to the RuBisCO small chain family. In terms of assembly, heterohexadecamer of 8 large and 8 small subunits.

Functionally, ruBisCO catalyzes two reactions: the carboxylation of D-ribulose 1,5-bisphosphate, the primary event in carbon dioxide fixation, as well as the oxidative fragmentation of the pentose substrate. Both reactions occur simultaneously and in competition at the same active site. Although the small subunit is not catalytic it is essential for maximal activity. The chain is Ribulose bisphosphate carboxylase small subunit from Nitrobacter vulgaris.